The sequence spans 356 residues: Activating signal cointegrator 1 complex subunit 1 (356 aa).

Residues 1–52 form a required for interaction with ASCC3 region; the sequence is MDVLRPQIVTFDGRNYRKNPIQEKQYQHEEDEDFYPDSMEYSDEPCGAYEVA. The KH domain maps to 57–119; sequence GFRATVSAPS…NGVVSARTRI (63 aa).

In terms of assembly, identified in the ASCC complex that contains ASCC1, ASCC2 and ASCC3. Interacts directly with ASCC3. The ASCC complex interacts with ALKBH3. Part of the ASC-1 complex, that contains TRIP4, ASCC1, ASCC2 and ASCC3. Interacts with CSRP1. Interacts with ZCCHC4. In terms of tissue distribution, expressed in the spinal cord, brain, paraspinal ganglia, thyroid, and submandibular glands.

It localises to the nucleus. The protein localises to the nucleus speckle. Functionally, plays a role in DNA damage repair as component of the ASCC complex. Part of the ASC-1 complex that enhances NF-kappa-B, SRF and AP1 transactivation. In cells responding to gastrin-activated paracrine signals, it is involved in the induction of SERPINB2 expression by gastrin. May also play a role in the development of neuromuscular junction. This Mus musculus (Mouse) protein is Activating signal cointegrator 1 complex subunit 1 (Ascc1).